The primary structure comprises 190 residues: Peptide deformylase (190 aa).

Fe cation-binding residues include Cys94 and His136. Glu137 is an active-site residue. Residue His140 participates in Fe cation binding.

The protein belongs to the polypeptide deformylase family. Requires Fe(2+) as cofactor.

It carries out the reaction N-terminal N-formyl-L-methionyl-[peptide] + H2O = N-terminal L-methionyl-[peptide] + formate. Its function is as follows. Removes the formyl group from the N-terminal Met of newly synthesized proteins. Requires at least a dipeptide for an efficient rate of reaction. N-terminal L-methionine is a prerequisite for activity but the enzyme has broad specificity at other positions. The chain is Peptide deformylase from Chlorobium phaeovibrioides (strain DSM 265 / 1930) (Prosthecochloris vibrioformis (strain DSM 265)).